We begin with the raw amino-acid sequence, 399 residues long: Transferrin receptor subunit ESAG6 (399 aa).

An N-terminal signal peptide occupies residues 1–17; sequence MRFWFVLLALLGKEIYA. N-linked (GlcNAc...) asparagine glycosylation is found at Asn26 and Asn110. 3 disulfide bridges follow: Cys34-Cys161, Cys84-Cys312, and Cys144-Cys215. 3 N-linked (GlcNAc...) asparagine glycosylation sites follow: Asn235, Asn250, and Asn360. A lipid anchor (GPI-anchor amidated asparagine) is attached at Asn376. Positions 377 to 399 are cleaved as a propeptide — removed in mature form; sequence AAAIHLSVSTAALCRSALLLGVL.

In terms of assembly, heterodimer composed of ESAG6 and ESAG7. In terms of processing, N-glycosylated. Glycosylation is dispensable for heterodimer formation and host transferrin binding.

It localises to the cell membrane. The protein resides in the flagellar pocket. In terms of biological role, transferrin receptor subunit involved in receptor-mediated acquisition of iron from the environment by binding host TF/transferrin. The sequence is that of Transferrin receptor subunit ESAG6 from Trypanosoma brucei brucei.